Consider the following 511-residue polypeptide: Centrosomal protein CCDC61 (511 aa).

The residue at position 1 (M1) is an N-acetylmethionine. The interval 1-143 is head domain; that stretch reads MDQPAGLQVD…PLPLPYQGKP (143 aa). 2 coiled-coil regions span residues 176-203 and 246-273; these read IWHL…SREE and SRRL…LNSE. T283 is subject to Phosphothreonine. 2 disordered regions span residues 284 to 413 and 429 to 476; these read LPPV…DSFR and SHSV…GGWV. The segment covering 290-302 has biased composition (basic and acidic residues); that stretch reads REGRASSSRERST. Residues S330 and S332 each carry the phosphoserine modification. Residues 360–369 show a composition bias toward low complexity; the sequence is KQQQQQRNRM. S371 and S374 each carry phosphoserine. Positions 433-442 are enriched in basic residues; it reads SRSRRCRGRG. S446 bears the Phosphoserine mark. Polar residues predominate over residues 449–458; it reads PWSRSKTKST. At S472 the chain carries Phosphoserine.

It belongs to the CCDC61 family. Forms homodimers (via head domain). Interacts with CEP170. Interacts with PCM1 and CEP131. Binds tubulin.

Its subcellular location is the cytoplasm. It localises to the cytoskeleton. The protein localises to the microtubule organizing center. The protein resides in the centrosome. It is found in the centriolar satellite. Its subcellular location is the cilium basal body. Microtubule-binding centrosomal protein required for centriole cohesion, independently of the centrosome-associated protein/CEP250 and rootletin/CROCC linker. In interphase, required for anchoring microtubule at the mother centriole subdistal appendages and for centrosome positioning. During mitosis, may be involved in spindle assembly and chromatin alignment by regulating the organization of spindle microtubules into a symmetrical structure. Plays a non-essential role in ciliogenesis. The polypeptide is Centrosomal protein CCDC61 (Mus musculus (Mouse)).